Consider the following 144-residue polypeptide: Large ribosomal subunit protein uL15 (144 aa).

The segment at Met1–Arg59 is disordered. The span at Arg21–Ala31 shows a compositional bias: gly residues.

It belongs to the universal ribosomal protein uL15 family. Part of the 50S ribosomal subunit.

Binds to the 23S rRNA. The chain is Large ribosomal subunit protein uL15 from Burkholderia thailandensis (strain ATCC 700388 / DSM 13276 / CCUG 48851 / CIP 106301 / E264).